A 285-amino-acid polypeptide reads, in one-letter code: Pseudouridine-5'-phosphate glycosidase (285 aa).

Glutamate 17 acts as the Proton donor in catalysis. Substrate is bound by residues lysine 77 and valine 97. Aspartate 126 is a Mn(2+) binding site. A substrate-binding site is contributed by 128 to 130; it reads SQD. The active-site Nucleophile is the lysine 147.

Belongs to the pseudouridine-5'-phosphate glycosidase family. Homotrimer. It depends on Mn(2+) as a cofactor.

It carries out the reaction D-ribose 5-phosphate + uracil = psi-UMP + H2O. Its function is as follows. Catalyzes the reversible cleavage of pseudouridine 5'-phosphate (PsiMP) to ribose 5-phosphate and uracil. Functions biologically in the cleavage direction, as part of a pseudouridine degradation pathway. The polypeptide is Pseudouridine-5'-phosphate glycosidase (Thermotoga sp. (strain RQ2)).